A 557-amino-acid polypeptide reads, in one-letter code: Myo-inositol transporter 2 (557 aa).

The Cytoplasmic segment spans residues 1 to 76 (MDFNNIPLAT…ENGEGFEAEK (76 aa)). Residues 24–69 (EMTTRPSETKKKVPFSEDMREIPSLPNEEEANATDPQANEVADENG) are disordered. Basic and acidic residues predominate over residues 30 to 44 (SETKKKVPFSEDMRE). Residues 77-97 (ISSWIWVLSAVAGISGLLFGY) form a helical membrane-spanning segment. Residues 98–99 (DT) lie on the Extracellular side of the membrane. The helical transmembrane segment at 100 to 120 (GVISGALAVLGSDLGHVLSSG) threads the bilayer. The Cytoplasmic segment spans residues 121–123 (QKE). The helical transmembrane segment at 124-144 (LITSATSFAALISATTSGWLA) threads the bilayer. The Extracellular portion of the chain corresponds to 145 to 157 (DWVGRKRLLLCAD). Residues 158–178 (AIFVIGSVIMAASRNVAMMVV) form a helical membrane-spanning segment. Residues 179-180 (GR) lie on the Cytoplasmic side of the membrane. Residues 181-201 (FIVGYGIGLTSLIVPMYITEL) form a helical membrane-spanning segment. Residues 202–209 (APARLRGR) are Extracellular-facing. A helical membrane pass occupies residues 210–230 (LVIIYVVFITGGQLIAYSLNA). Topologically, residues 231-240 (AFEHVHQGWR) are cytoplasmic. Residues 241–261 (IMFGIGAAPALGQLISLFWTP) traverse the membrane as a helical segment. Over 262 to 367 (ESPRYLLRHN…IFQSVGFKNS (106 aa)) the chain is Extracellular. A helical transmembrane segment spans residues 368–388 (ISVSIVVGATNFVFTIVAFMF). The Cytoplasmic segment spans residues 389 to 396 (IDRIGRRR). The helical transmembrane segment at 397-417 (ILLCTSAVMIAGLALCAIAYH) threads the bilayer. Topologically, residues 418 to 432 (FLPADTTQNTNSGWQ) are extracellular. A helical membrane pass occupies residues 433–453 (YVVLASIIIFLASYASGIGNI). Residues 454–468 (PWQQAELFPMEVRAL) lie on the Cytoplasmic side of the membrane. Residues 469–489 (GAGFSTAINWVGNLIISASFL) form a helical membrane-spanning segment. Residues 490–498 (TMMESITPT) are Extracellular-facing. Residues 499–519 (GTFALFAGFCFVGLVTSYFTY) form a helical membrane-spanning segment. The Cytoplasmic segment spans residues 520 to 557 (PELAGMSIENIHKLLEKGFWQAVKESTKRVRKGRIDEA).

This sequence belongs to the major facilitator superfamily. Sugar transporter (TC 2.A.1.1) family.

It is found in the membrane. It catalyses the reaction myo-inositol(out) + H(+)(out) = myo-inositol(in) + H(+)(in). In terms of biological role, transporter for myo-inositol. The chain is Myo-inositol transporter 2 (itr2) from Schizosaccharomyces pombe (strain 972 / ATCC 24843) (Fission yeast).